Consider the following 204-residue polypeptide: Transmembrane protein 253 (204 aa).

4 helical membrane passes run 33–53 (LVLAVSQVWLAIAMVPFTISV), 62–82 (LVTALPLWPGASGLLTGIITL), 96–116 (MMISNTFNLILGFVAVVIEVM), and 138–158 (LSAEAFTLAGVLVSTYALFLL). Residues 184 to 204 (EEVSGLENGPVVASTGNRTDE) are disordered.

The protein localises to the membrane. The protein is Transmembrane protein 253 (Tmem253) of Mus musculus (Mouse).